Consider the following 205-residue polypeptide: Histidine biosynthesis bifunctional protein HisIE (205 aa).

The phosphoribosyl-AMP cyclohydrolase stretch occupies residues 1–115 (MIDIKELKFD…DEETEDGIEI (115 aa)). Residues 116-205 (LNKLYERIKG…YNELERRYKK (90 aa)) form a phosphoribosyl-ATP pyrophosphohydrolase region.

The protein in the N-terminal section; belongs to the PRA-CH family. This sequence in the C-terminal section; belongs to the PRA-PH family.

The protein resides in the cytoplasm. The catalysed reaction is 1-(5-phospho-beta-D-ribosyl)-ATP + H2O = 1-(5-phospho-beta-D-ribosyl)-5'-AMP + diphosphate + H(+). The enzyme catalyses 1-(5-phospho-beta-D-ribosyl)-5'-AMP + H2O = 1-(5-phospho-beta-D-ribosyl)-5-[(5-phospho-beta-D-ribosylamino)methylideneamino]imidazole-4-carboxamide. It functions in the pathway amino-acid biosynthesis; L-histidine biosynthesis; L-histidine from 5-phospho-alpha-D-ribose 1-diphosphate: step 2/9. It participates in amino-acid biosynthesis; L-histidine biosynthesis; L-histidine from 5-phospho-alpha-D-ribose 1-diphosphate: step 3/9. The protein is Histidine biosynthesis bifunctional protein HisIE of Caldanaerobacter subterraneus subsp. tengcongensis (strain DSM 15242 / JCM 11007 / NBRC 100824 / MB4) (Thermoanaerobacter tengcongensis).